A 311-amino-acid polypeptide reads, in one-letter code: HPr kinase/phosphorylase (311 aa).

Residues H139 and K160 contribute to the active site. An ATP-binding site is contributed by 154–161 (GQSGVGKS). S161 is a binding site for Mg(2+). The Proton acceptor; for phosphorylation activity. Proton donor; for dephosphorylation activity role is filled by D178. An important for the catalytic mechanism of both phosphorylation and dephosphorylation region spans residues 202 to 211 (LEIRGIGIID). E203 provides a ligand contact to Mg(2+). R244 is an active-site residue. The segment at 265 to 270 (PVRPGR) is important for the catalytic mechanism of dephosphorylation.

The protein belongs to the HPrK/P family. Homohexamer. The cofactor is Mg(2+).

It carries out the reaction [HPr protein]-L-serine + ATP = [HPr protein]-O-phospho-L-serine + ADP + H(+). The enzyme catalyses [HPr protein]-O-phospho-L-serine + phosphate + H(+) = [HPr protein]-L-serine + diphosphate. Catalyzes the ATP- as well as the pyrophosphate-dependent phosphorylation of a specific serine residue in HPr, a phosphocarrier protein of the phosphoenolpyruvate-dependent sugar phosphotransferase system (PTS). HprK/P also catalyzes the pyrophosphate-producing, inorganic phosphate-dependent dephosphorylation (phosphorolysis) of seryl-phosphorylated HPr (P-Ser-HPr). The two antagonistic activities of HprK/P are regulated by several intracellular metabolites, which change their concentration in response to the absence or presence of rapidly metabolisable carbon sources (glucose, fructose, etc.) in the growth medium. Therefore, by controlling the phosphorylation state of HPr, HPrK/P is a sensor enzyme that plays a major role in the regulation of carbon metabolism and sugar transport: it mediates carbon catabolite repression (CCR), and regulates PTS-catalyzed carbohydrate uptake and inducer exclusion. This is HPr kinase/phosphorylase from Exiguobacterium sp. (strain ATCC BAA-1283 / AT1b).